A 69-amino-acid chain; its full sequence is Small ribosomal subunit protein uS7 (69 aa).

It belongs to the universal ribosomal protein uS7 family. Part of the 30S ribosomal subunit.

Its function is as follows. One of the primary rRNA binding proteins, it binds directly to 16S rRNA where it nucleates assembly of the head domain of the 30S subunit. Is located at the subunit interface close to the decoding center. This is Small ribosomal subunit protein uS7 (rps7) from Methanococcoides methylutens.